Consider the following 247-residue polypeptide: tRNA pseudouridine synthase A (247 aa).

The active-site Nucleophile is the D52. Residue Y113 coordinates substrate.

The protein belongs to the tRNA pseudouridine synthase TruA family. Homodimer.

The enzyme catalyses uridine(38/39/40) in tRNA = pseudouridine(38/39/40) in tRNA. In terms of biological role, formation of pseudouridine at positions 38, 39 and 40 in the anticodon stem and loop of transfer RNAs. This Bartonella bacilliformis (strain ATCC 35685 / KC583 / Herrer 020/F12,63) protein is tRNA pseudouridine synthase A.